Consider the following 294-residue polypeptide: ATP synthase gamma chain (294 aa).

Belongs to the ATPase gamma chain family. As to quaternary structure, F-type ATPases have 2 components, CF(1) - the catalytic core - and CF(0) - the membrane proton channel. CF(1) has five subunits: alpha(3), beta(3), gamma(1), delta(1), epsilon(1). CF(0) has three main subunits: a, b and c.

It localises to the cell membrane. Its function is as follows. Produces ATP from ADP in the presence of a proton gradient across the membrane. The gamma chain is believed to be important in regulating ATPase activity and the flow of protons through the CF(0) complex. The sequence is that of ATP synthase gamma chain from Opitutus terrae (strain DSM 11246 / JCM 15787 / PB90-1).